The following is a 503-amino-acid chain: Apolipoprotein N-acyltransferase (503 aa).

A run of 7 helical transmembrane segments spans residues 13-32 (RWRG…LTAL), 34-54 (MPGF…LYAV), 63-83 (AFLS…WVLP), 102-122 (IVVF…FGFL), 124-144 (YFAP…YTIF), 173-193 (IVSI…NVLF), and 203-223 (LLIF…VHLL). The region spanning 231–460 (FKVVALQPNV…RLAGEFHIKA (230 aa)) is the CN hydrolase domain. The active-site Proton acceptor is the Glu-273. Lys-321 is an active-site residue. Cys-371 functions as the Nucleophile in the catalytic mechanism. Residues 468-488 (VRYGDWFFYLSVILAVVSVFI) form a helical membrane-spanning segment.

The protein belongs to the CN hydrolase family. Apolipoprotein N-acyltransferase subfamily.

It localises to the cell inner membrane. It carries out the reaction N-terminal S-1,2-diacyl-sn-glyceryl-L-cysteinyl-[lipoprotein] + a glycerophospholipid = N-acyl-S-1,2-diacyl-sn-glyceryl-L-cysteinyl-[lipoprotein] + a 2-acyl-sn-glycero-3-phospholipid + H(+). It participates in protein modification; lipoprotein biosynthesis (N-acyl transfer). In terms of biological role, catalyzes the phospholipid dependent N-acylation of the N-terminal cysteine of apolipoprotein, the last step in lipoprotein maturation. The protein is Apolipoprotein N-acyltransferase of Thermotoga maritima (strain ATCC 43589 / DSM 3109 / JCM 10099 / NBRC 100826 / MSB8).